The sequence spans 278 residues: Hydroxyethylthiazole kinase (278 aa).

Substrate is bound at residue Met49. The ATP site is built by Asn125 and Ser171. Residue Gly198 participates in substrate binding.

The protein belongs to the Thz kinase family. Requires Mg(2+) as cofactor.

It catalyses the reaction 5-(2-hydroxyethyl)-4-methylthiazole + ATP = 4-methyl-5-(2-phosphooxyethyl)-thiazole + ADP + H(+). Its pathway is cofactor biosynthesis; thiamine diphosphate biosynthesis; 4-methyl-5-(2-phosphoethyl)-thiazole from 5-(2-hydroxyethyl)-4-methylthiazole: step 1/1. In terms of biological role, catalyzes the phosphorylation of the hydroxyl group of 4-methyl-5-beta-hydroxyethylthiazole (THZ). This Natronomonas pharaonis (strain ATCC 35678 / DSM 2160 / CIP 103997 / JCM 8858 / NBRC 14720 / NCIMB 2260 / Gabara) (Halobacterium pharaonis) protein is Hydroxyethylthiazole kinase.